A 153-amino-acid polypeptide reads, in one-letter code: MADTLMSDTPFWQRKTLDEMTDAEWESLCDGCGQCCLHKLMDEDTDEIYFTNVACRQLNIKTCQCRHYERRFEFEPDCIKLTRENLPDFEWLPMTCAYRLLAEGKPLPTWHPLLTGSKAAMHGERISVRHIAVKESEVRDWQDHILNKPSWAE.

It belongs to the UPF0260 family.

In Salmonella dublin (strain CT_02021853), this protein is UPF0260 protein YcgN.